Consider the following 249-residue polypeptide: Probable septum site-determining protein MinC (249 aa).

A disordered region spans residues 115–141; the sequence is KPAQEAPAQAEPEAAAAPEPANEPAPA. The segment covering 118-141 has biased composition (low complexity); the sequence is QEAPAQAEPEAAAAPEPANEPAPA.

The protein belongs to the MinC family. In terms of assembly, interacts with MinD and FtsZ.

Cell division inhibitor that blocks the formation of polar Z ring septums. Rapidly oscillates between the poles of the cell to destabilize FtsZ filaments that have formed before they mature into polar Z rings. Prevents FtsZ polymerization. The sequence is that of Probable septum site-determining protein MinC from Marinobacter nauticus (strain ATCC 700491 / DSM 11845 / VT8) (Marinobacter aquaeolei).